The chain runs to 174 residues: Gamma-crystallin E (174 aa).

2 consecutive Beta/gamma crystallin 'Greek key' domains span residues 2 to 40 (GKIT…RVDS) and 41 to 83 (GCWM…RLIP). The connecting peptide stretch occupies residues 84-87 (HSSS). 2 Beta/gamma crystallin 'Greek key' domains span residues 88–128 (HRIK…HVME) and 129–171 (GYWV…RRIM).

It belongs to the beta/gamma-crystallin family. In terms of tissue distribution, detected in the superior olivary complex of the auditory hindbrain.

Functionally, crystallins are the dominant structural components of the vertebrate eye lens. The protein is Gamma-crystallin E (Cryge) of Mus musculus (Mouse).